A 388-amino-acid polypeptide reads, in one-letter code: Sulfate adenylyltransferase (388 aa).

It belongs to the sulfate adenylyltransferase family.

It catalyses the reaction sulfate + ATP + H(+) = adenosine 5'-phosphosulfate + diphosphate. It participates in sulfur metabolism; hydrogen sulfide biosynthesis; sulfite from sulfate: step 1/3. In Acaryochloris marina (strain MBIC 11017), this protein is Sulfate adenylyltransferase.